The following is a 263-amino-acid chain: Translation initiation factor 2 subunit alpha (263 aa).

Positions 12–83 constitute an S1 motif domain; it reads GEILIATVKQ…RKGTIDVSLK (72 aa).

This sequence belongs to the eIF-2-alpha family. Heterotrimer composed of an alpha, a beta and a gamma chain.

In terms of biological role, eIF-2 functions in the early steps of protein synthesis by forming a ternary complex with GTP and initiator tRNA. The sequence is that of Translation initiation factor 2 subunit alpha from Sulfurisphaera tokodaii (strain DSM 16993 / JCM 10545 / NBRC 100140 / 7) (Sulfolobus tokodaii).